An 89-amino-acid chain; its full sequence is Large ribosomal subunit protein uL30 (89 aa).

This sequence belongs to the universal ribosomal protein uL30 family. Part of the 50S ribosomal subunit.

The sequence is that of Large ribosomal subunit protein uL30 from Myxococcus xanthus (strain DK1622).